A 298-amino-acid polypeptide reads, in one-letter code: ADP/ATP translocase 3 (298 aa).

N-acetylmethionine is present on M1. The Mitochondrial intermembrane portion of the chain corresponds to 1 to 7 (MTEQAIS). Residue T2 is modified to N-acetylthreonine; in ADP/ATP translocase 3, N-terminally processed. The Solcar 1 repeat unit spans residues 6–98 (ISFAKDFLAG…FAFKDKYKQI (93 aa)). A helical membrane pass occupies residues 8 to 37 (FAKDFLAGGIAAAISKTAVAPIERVKLLLQ). Residues 38 to 74 (VQHASKQIAADKQYKGIVDCIVRIPKEQGVLSFWRGN) are Mitochondrial matrix-facing. The residue at position 52 (K52) is an N6,N6,N6-trimethyllysine. The helical transmembrane segment at 75 to 99 (LANVIRYFPTQALNFAFKDKYKQIF) threads the bilayer. ADP contacts are provided by R80 and K92. Over 100–109 (LGGVDKHTQF) the chain is Mitochondrial intermembrane. K105 carries the N6-acetyllysine modification. Residues 110 to 130 (WRYFAGNLASGGAAGATSLCF) traverse the membrane as a helical segment. Solcar repeat units lie at residues 111–201 (RYFA…AKGM) and 212–297 (VSWM…LKKV). Topologically, residues 131-178 (VYPLDFARTRLAADVGKSGTEREFRGLGDCLVKITKSDGIRGLYQGFS) are mitochondrial matrix. A helical transmembrane segment spans residues 179–199 (VSVQGIIIYRAAYFGVYDTAK). The Mitochondrial intermembrane portion of the chain corresponds to 200 to 210 (GMLPDPKNTHI). Residues 211 to 231 (VVSWMIAQTVTAVAGVVSYPF) traverse the membrane as a helical segment. Residues 232–273 (DTVRRRMMMQSGRKGADIMYTGTVDCWRKIFRDEGGKAFFKG) are Mitochondrial matrix-facing. R235 contacts ADP. The important for transport activity stretch occupies residues 235–240 (RRRMMM). Residues 235 to 240 (RRRMMM) carry the Nucleotide carrier signature motif motif. N6-acetyllysine is present on K268. Residues 274 to 291 (AWSNVLRGMGGAFVLVLY) traverse the membrane as a helical segment. Topologically, residues 292 to 298 (DELKKVI) are mitochondrial intermembrane.

The protein belongs to the mitochondrial carrier (TC 2.A.29) family. Monomer. Found in a complex with ARL2, ARL2BP and SLC25A6/ANT3. In terms of assembly, (Microbial infection) Interacts with influenza A virus PB1-F2 protein. As to quaternary structure, (Microbial infection) Interacts with HIV-1 Vpr. In terms of processing, trimethylated by ANTKMT at Lys-52. As to expression, expressed in erythrocytes (at protein level).

The protein localises to the mitochondrion inner membrane. Its subcellular location is the membrane. It catalyses the reaction ADP(in) + ATP(out) = ADP(out) + ATP(in). The enzyme catalyses H(+)(in) = H(+)(out). Its activity is regulated as follows. The matrix-open state (m-state) is inhibited by the membrane-permeable bongkrekic acid (BKA). The cytoplasmic-open state (c-state) is inhibited by the membrane-impermeable toxic inhibitor carboxyatractyloside (CATR). Proton transporter activity is inhibited by ADP:ATP antiporter activity. In terms of biological role, ADP:ATP antiporter that mediates import of ADP into the mitochondrial matrix for ATP synthesis, and export of ATP out to fuel the cell. Cycles between the cytoplasmic-open state (c-state) and the matrix-open state (m-state): operates by the alternating access mechanism with a single substrate-binding site intermittently exposed to either the cytosolic (c-state) or matrix (m-state) side of the inner mitochondrial membrane. In addition to its ADP:ATP antiporter activity, also involved in mitochondrial uncoupling and mitochondrial permeability transition pore (mPTP) activity. Plays a role in mitochondrial uncoupling by acting as a proton transporter: proton transport uncouples the proton flows via the electron transport chain and ATP synthase to reduce the efficiency of ATP production and cause mitochondrial thermogenesis. Proton transporter activity is inhibited by ADP:ATP antiporter activity, suggesting that SLC25A6/ANT3 acts as a master regulator of mitochondrial energy output by maintaining a delicate balance between ATP production (ADP:ATP antiporter activity) and thermogenesis (proton transporter activity). Proton transporter activity requires free fatty acids as cofactor, but does not transport it. Also plays a key role in mPTP opening, a non-specific pore that enables free passage of the mitochondrial membranes to solutes of up to 1.5 kDa, and which contributes to cell death. It is however unclear if SLC25A6/ANT3 constitutes a pore-forming component of mPTP or regulates it. This is ADP/ATP translocase 3 from Homo sapiens (Human).